The primary structure comprises 302 residues: Glutamate/aspartate import solute-binding protein (302 aa).

Positions 1-22 (MQLRKLTTAMLVMGLSAGLAHA) are cleaved as a signal peptide.

The protein belongs to the bacterial solute-binding protein 3 family. In terms of assembly, the complex is composed of two ATP-binding proteins (GltL), two transmembrane proteins (GltJ and GltK) and a solute-binding protein (GltI).

It is found in the periplasm. Its function is as follows. Part of the ABC transporter complex GltIJKL involved in glutamate and aspartate uptake. Binds to both glutamate and aspartate. The polypeptide is Glutamate/aspartate import solute-binding protein (gltI) (Salmonella typhimurium (strain LT2 / SGSC1412 / ATCC 700720)).